Consider the following 414-residue polypeptide: uncharacterized protein (414 aa).

The interval 87–117 (KTNDDNKTNGRETHLRPSPSKPEYTGRPTQN) is disordered. Positions 88–101 (TNDDNKTNGRETHL) are enriched in basic and acidic residues. Residues 243 to 405 (SMLQSSIDKL…RNKLEMEVER (163 aa)) adopt a coiled-coil conformation.

This is an uncharacterized protein from Encephalitozoon cuniculi (strain GB-M1) (Microsporidian parasite).